We begin with the raw amino-acid sequence, 465 residues long: Hydroxyacid-oxoacid transhydrogenase, mitochondrial (465 aa).

It belongs to the iron-containing alcohol dehydrogenase family. Hydroxyacid-oxoacid transhydrogenase subfamily.

The protein resides in the mitochondrion. The catalysed reaction is (S)-3-hydroxybutanoate + 2-oxoglutarate = (R)-2-hydroxyglutarate + acetoacetate. The enzyme catalyses 4-hydroxybutanoate + 2-oxoglutarate = (R)-2-hydroxyglutarate + succinate semialdehyde. In terms of biological role, catalyzes the cofactor-independent reversible oxidation of gamma-hydroxybutyrate (GHB) to succinic semialdehyde (SSA) coupled to reduction of 2-ketoglutarate (2-KG) to D-2-hydroxyglutarate (D-2-HG). L-3-hydroxybutyrate (L-3-OHB) is also a substrate for HOT when using 2-KG as hydrogen acceptor, resulting in the formation of D-2-HG. The chain is Hydroxyacid-oxoacid transhydrogenase, mitochondrial from Caenorhabditis elegans.